The following is a 317-amino-acid chain: MLIRFGYVSHAMALWDCSPAKTMTFTSFKKLSKQEREDKLYHVIRQNLEHTIRILHYNIAHEIPLYRLSSSIVPLATHPEVEFDYIGVFTPLWRKIGALIKEHNLRISFHPNQFTLFTSDKPHITTNAITDMTYHYKILDAIGIADSSYINIHVGGAYGNKEKAIERFHENIKKLPTHIKKQMTLENDDKTYTTAETLSICQKENIPFVFDYHHHMANLCEEPLEELLPAIFETWSHTNISPKVHISSPRSEKEFRAHAEYIDLEFIKPFLHIAKKHNHNFDIMIESKQKDLALFQLIDELSAIRGIKRISGAMLQW.

This sequence belongs to the uve1/UvsE family.

Functionally, component in a DNA repair pathway. Removal of UV LIGHT damaged nucleotides. Recognizes pyrimidine dimers and cleave a phosphodiester bond immediately 5' to the lesion. The polypeptide is UV DNA damage endonuclease (Bacillus cereus (strain B4264)).